We begin with the raw amino-acid sequence, 488 residues long: PPE family protein PPE10 (488 aa).

Disordered stretches follow at residues 207-232 (NNNWGSGNTGSSNVGTGNTGSSNIGS) and 443-488 (SDAG…LRTE).

It belongs to the mycobacterial PPE family.

Its subcellular location is the secreted. Its function is as follows. Plays a major role in the integrity and stability of the capsule. In Mycobacterium marinum (strain ATCC BAA-535 / M), this protein is PPE family protein PPE10.